Here is a 233-residue protein sequence, read N- to C-terminus: 2-C-methyl-D-erythritol 4-phosphate cytidylyltransferase (233 aa).

This sequence belongs to the IspD/TarI cytidylyltransferase family. IspD subfamily.

The catalysed reaction is 2-C-methyl-D-erythritol 4-phosphate + CTP + H(+) = 4-CDP-2-C-methyl-D-erythritol + diphosphate. It functions in the pathway isoprenoid biosynthesis; isopentenyl diphosphate biosynthesis via DXP pathway; isopentenyl diphosphate from 1-deoxy-D-xylulose 5-phosphate: step 2/6. In terms of biological role, catalyzes the formation of 4-diphosphocytidyl-2-C-methyl-D-erythritol from CTP and 2-C-methyl-D-erythritol 4-phosphate (MEP). The chain is 2-C-methyl-D-erythritol 4-phosphate cytidylyltransferase from Vibrio atlanticus (strain LGP32) (Vibrio splendidus (strain Mel32)).